We begin with the raw amino-acid sequence, 526 residues long: Organic cation/carnitine transporter 4 (526 aa).

Topologically, residues 1–52 (MESPEDRNGNDVRQPLLEKIPVKKEAEGEERLCIDEMLQRYCGEFGRWQLKH) are cytoplasmic. Residues 53–73 (FVLTCIAWALEAFHTMVMIFA) form a helical membrane-spanning segment. At 74–123 (DQEPEWRCVGSDCRVGSLNCELDPSSWEWTAGKGSSTVSEWGLICGDKYK) the chain is on the extracellular side. Residues 124–144 (VGLVQALFFAGCMIGAGVFGH) traverse the membrane as a helical segment. Topologically, residues 145 to 153 (LSDSKLGRK) are cytoplasmic. The helical transmembrane segment at 154-174 (GSLTVVCIINAIFGIATAFSP) threads the bilayer. Residues 175-179 (NYWTY) are Extracellular-facing. A helical transmembrane segment spans residues 180 to 200 (VVLRFLTGFSTGGVGLTAFVL). Position 201-208 (201-208 (ATEPIGPS)) interacts with ATP. At 201 to 214 (ATEPIGPSKRGVAG) the chain is on the cytoplasmic side. A helical transmembrane segment spans residues 215–235 (MSTFYFFSAGIAVLSGIAYVF). Residues 236–240 (RSWRE) are Extracellular-facing. A helical transmembrane segment spans residues 241-261 (LFIVSSLPSLLFLLIVIPFIS). At 262-331 (ESPRWYLVRG…ILSPLMRMRL (70 aa)) the chain is on the cytoplasmic side. A helical transmembrane segment spans residues 332–352 (VISVAISFTVSIVYYGLSLNV). At 353 to 360 (GNLKTNLY) the chain is on the extracellular side. A helical transmembrane segment spans residues 361-381 (LNVFVNAVSEMPAFAITAVLL). Residues 382 to 390 (DKYGRKPLS) are Cytoplasmic-facing. The chain crosses the membrane as a helical span at residues 391–411 (IGTQWFSCVFCLVGFSVWGAG). Topologically, residues 412–418 (PWKSVRM) are extracellular. The chain crosses the membrane as a helical span at residues 419 to 439 (VSGVLGIFGMAGTYNLLFIYI). Residues 440 to 451 (AELFPTVVRNAA) lie on the Cytoplasmic side of the membrane. Residues 452 to 472 (LGCATQAAQMGAILAPFVVVL) traverse the membrane as a helical segment. At 473–475 (GEE) the chain is on the extracellular side. Residues 476–496 (LPFGVFAVCGLVGGGLAFYLP) form a helical membrane-spanning segment. Over 497–526 (ETLNKPLYDTMFGMHEAESESNRERGEVIC) the chain is Cytoplasmic.

It belongs to the major facilitator (TC 2.A.1) superfamily. Organic cation transporter (TC 2.A.1.19) family. Mostly expressed in siliques, and, to a lower extent, in stems, leaves, flowers and siliques. Present in pollen. In the stems of secondary inflorescences present in the phloem cells and xylem parenchyma cells.

Its subcellular location is the vacuole membrane. Its function is as follows. High affinity carnitine transporter involved in the active cellular uptake of carnitine. Also transports organic cations. This chain is Organic cation/carnitine transporter 4 (OCT4), found in Arabidopsis thaliana (Mouse-ear cress).